The following is a 325-amino-acid chain: Hydroxymethylglutaryl-CoA lyase, mitochondrial (325 aa).

The N-terminal 27 residues, 1–27, are a transit peptide targeting the mitochondrion; the sequence is MAAMRKALPRRLVGLASLRAVSTSSMG. The region spanning 33–300 is the Pyruvate carboxyltransferase domain; the sequence is VKIVEVGPRD…HTGVNLQKLL (268 aa). Arginine 41 is a binding site for substrate. Aspartate 42 is an a divalent metal cation binding site. Residue lysine 48 is modified to N6-acetyllysine; alternate. Lysine 48 carries the post-translational modification N6-succinyllysine; alternate. The residue at position 111 (lysine 111) is an N6-acetyllysine. N6-acetyllysine; alternate is present on residues lysine 137 and lysine 179. N6-succinyllysine; alternate occurs at positions 137 and 179. A divalent metal cation is bound by residues histidine 233 and histidine 235. The active site involves cysteine 266. A divalent metal cation is bound at residue asparagine 275. The Microbody targeting signal signature appears at 323-325; that stretch reads CKL. N6-acetyllysine is present on lysine 324.

Belongs to the HMG-CoA lyase family. Homodimer; disulfide-linked. Can also form homotetramers. A divalent metal cation is required as a cofactor. As to expression, highest expression in liver. Expressed in pancreas, kidney, intestine, testis, fibroblasts and lymphoblasts. Very low expression in brain and skeletal muscle. The relative expression of isoform 2 (at mRNA level) is highest in heart (30%), skeletal muscle (22%), and brain (14%).

Its subcellular location is the mitochondrion matrix. It localises to the peroxisome. The catalysed reaction is (3S)-3-hydroxy-3-methylglutaryl-CoA = acetoacetate + acetyl-CoA. It participates in metabolic intermediate metabolism; (S)-3-hydroxy-3-methylglutaryl-CoA degradation; acetoacetate from (S)-3-hydroxy-3-methylglutaryl-CoA: step 1/1. With respect to regulation, stimulated by reducing agents such as dithiothreitol (DTT). Functionally, mitochondrial 3-hydroxy-3-methylglutaryl-CoA lyase that catalyzes a cation-dependent cleavage of (S)-3-hydroxy-3-methylglutaryl-CoA into acetyl-CoA and acetoacetate, a key step in ketogenesis. Terminal step in leucine catabolism. Ketone bodies (beta-hydroxybutyrate, acetoacetate and acetone) are essential as an alternative source of energy to glucose, as lipid precursors and as regulators of metabolism. The sequence is that of Hydroxymethylglutaryl-CoA lyase, mitochondrial (HMGCL) from Homo sapiens (Human).